Reading from the N-terminus, the 465-residue chain is Gamma-aminobutyric acid receptor subunit gamma-1 (465 aa).

Positions 1–20 (MGSGKVFLFSPSLLWSQTRG) are cleaved as a signal peptide. Topologically, residues 21–273 (VRLIFLLLTL…FDLSRRMGYF (253 aa)) are extracellular. 2 N-linked (GlcNAc...) asparagine glycosylation sites follow: N50 and N127. C188 and C202 are disulfide-bonded. An N-linked (GlcNAc...) asparagine glycan is attached at N245. A helical transmembrane segment spans residues 274-294 (TIQTYIPCILTVVLSWVSFWI). Topologically, residues 295–300 (NKDAVP) are cytoplasmic. Residues 301–320 (ARTSLGITTVLTMTTLSTIA) traverse the membrane as a helical segment. At 321–328 (RKSLPKVS) the chain is on the extracellular side. A helical transmembrane segment spans residues 329–349 (YVTAMDLFVSVCFIFVFAALM). The Cytoplasmic segment spans residues 350–444 (EYGTLHYFTS…RIAKIDSYSR (95 aa)). The chain crosses the membrane as a helical span at residues 445–465 (IFFPTAFALFNLVYWVGYLYL).

This sequence belongs to the ligand-gated ion channel (TC 1.A.9) family. Gamma-aminobutyric acid receptor (TC 1.A.9.5) subfamily. GABRG1 sub-subfamily. Heteropentamer, formed by a combination of alpha (GABRA1-6), beta (GABRB1-3), gamma (GABRG1-3), delta (GABRD), epsilon (GABRE), rho (GABRR1-3), pi (GABRP) and theta (GABRQ) chains, each subunit exhibiting distinct physiological and pharmacological properties. May be palmitoylated. Expressed in brain.

It localises to the postsynaptic cell membrane. Its subcellular location is the cell membrane. The enzyme catalyses chloride(in) = chloride(out). In terms of biological role, gamma subunit of the heteropentameric ligand-gated chloride channel gated by gamma-aminobutyric acid (GABA), a major inhibitory neurotransmitter in the brain. GABA-gated chloride channels, also named GABA(A) receptors (GABAAR), consist of five subunits arranged around a central pore and contain GABA active binding site(s) located at the alpha and beta subunit interface(s). When activated by GABA, GABAARs selectively allow the flow of chloride anions across the cell membrane down their electrochemical gradient. Chloride influx into the postsynaptic neuron following GABAAR opening decreases the neuron ability to generate a new action potential, thereby reducing nerve transmission. This is Gamma-aminobutyric acid receptor subunit gamma-1 from Rattus norvegicus (Rat).